Consider the following 257-residue polypeptide: Thiazole synthase (257 aa).

The active-site Schiff-base intermediate with DXP is the K100. 1-deoxy-D-xylulose 5-phosphate contacts are provided by residues G161, 187–188 (AG), and 209–210 (NT).

It belongs to the ThiG family. Homotetramer. Forms heterodimers with either ThiH or ThiS.

It is found in the cytoplasm. It carries out the reaction [ThiS sulfur-carrier protein]-C-terminal-Gly-aminoethanethioate + 2-iminoacetate + 1-deoxy-D-xylulose 5-phosphate = [ThiS sulfur-carrier protein]-C-terminal Gly-Gly + 2-[(2R,5Z)-2-carboxy-4-methylthiazol-5(2H)-ylidene]ethyl phosphate + 2 H2O + H(+). The protein operates within cofactor biosynthesis; thiamine diphosphate biosynthesis. Its function is as follows. Catalyzes the rearrangement of 1-deoxy-D-xylulose 5-phosphate (DXP) to produce the thiazole phosphate moiety of thiamine. Sulfur is provided by the thiocarboxylate moiety of the carrier protein ThiS. In vitro, sulfur can be provided by H(2)S. The sequence is that of Thiazole synthase from Pelagibacter ubique (strain HTCC1062).